A 139-amino-acid polypeptide reads, in one-letter code: MYYFHLRVTLMEPNLAVFHDLKLTVINAWESLTVEMLSHYSVDYLFRLEEFAGVYSASIFLPTHKVDWTFLKRAVALLRECIWRRFECTQVPRGVASIYAVRNTWTPSANRVARHFVKRGALVGMQPCLHECTYERDAC.

This is an uncharacterized protein from Galliformes (FAdV-1).